Here is a 419-residue protein sequence, read N- to C-terminus: Effector protein BipC (419 aa).

Disordered stretches follow at residues 62–94 (VAGSGAQRVELARPKPDAQTRATDRRTVSGLER) and 338–402 (LQSG…AKSQ). Composition is skewed to basic and acidic residues over residues 71–94 (ELARPKPDAQTRATDRRTVSGLER) and 380–392 (TRDEAAHRSREAA).

It belongs to the SctB/SipC family.

It is found in the secreted. This is Effector protein BipC (bipC) from Burkholderia pseudomallei (strain 1710b).